The primary structure comprises 1118 residues: Pleckstrin homology domain-containing family A member 7 (1118 aa).

WW domains follow at residues 8 to 41 (DTLP…HPRT) and 53 to 86 (SDLP…HPVT). The segment covering 100 to 113 (EEPHPHMSKPERNQ) has biased composition (basic and acidic residues). The interval 100 to 145 (EEPHPHMSKPERNQRPSSMVSETSTAGTTSTLEAKPGPKIVKSSSK) is disordered. Positions 114–131 (RPSSMVSETSTAGTTSTL) are enriched in polar residues. The PH domain maps to 163–281 (PVVVRGWLHK…WVRAMNQAAQ (119 aa)). Basic and acidic residues-rich tracts occupy residues 334–355 (FNRR…EGRR) and 434–443 (HWTKAQKGDG). Disordered stretches follow at residues 334–512 (FNRR…RRAH) and 528–629 (QFRH…RRSM). The span at 452–481 (LPRQGPSQPLSFPENYQSLPKSTRHLSGSS) shows a compositional bias: polar residues. A compositionally biased stretch (basic and acidic residues) spans 494–512 (YAQDRASHLKMSSEERRAH). Residues Ser533, Ser542, Ser566, Ser601, Ser605, and Ser609 each carry the phosphoserine modification. Residues 535–693 (TAPIGAGSPE…AESDIDVKLS (159 aa)) are interaction with CTNND1. Positions 564–579 (PPSPSDIPPPGPPRPF) are enriched in pro residues. The segment covering 586-602 (TPAERVTVKPPEQRRSV) has biased composition (basic and acidic residues). Residues 697–798 (EQDRILQDLE…LQEQHRRAFF (102 aa)) adopt a coiled-coil conformation. Disordered stretches follow at residues 839–873 (KTVP…VRTP) and 886–968 (VPYR…EQGQ). Residues Ser857 and Ser864 each carry the phosphoserine modification. At Thr867 the chain carries Phosphothreonine. 3 positions are modified to phosphoserine: Ser868, Ser900, and Ser904. Pro residues predominate over residues 930–939 (DQPPAVPPLP). Over residues 955-966 (RQSDERKRDREQ) the composition is skewed to basic and acidic residues. 2 positions are modified to phosphoserine: Ser983 and Leu990. Residues 1003–1024 (GSESRYQTLPGRGLSGSTSRLQ) are disordered. A coiled-coil region spans residues 1064–1091 (QRGKMSAEEQLERMKRHQKALVRERKRT).

As to quaternary structure, interacts with CAMSAP3 and CTNND1. Interacts (via WW domains) with TSPAN33 (via cytoplasmic domain) and with PDZD11; the interaction with TSPAN33 is dependent on PDZD11 being bound to PLEKHA7 and facilitates the docking of ADAM10 to zonula adherens through interaction of TSPAN33 with ADAM10. In terms of tissue distribution, expressed in kidney and lung (at protein level).

The protein resides in the cell junction. It localises to the adherens junction. It is found in the cytoplasm. Its subcellular location is the cytoskeleton. The protein localises to the microtubule organizing center. The protein resides in the centrosome. In terms of biological role, required for zonula adherens biogenesis and maintenance. Acts via its interaction with CAMSAP3, which anchors microtubules at their minus-ends to zonula adherens, leading to the recruitment of KIFC3 kinesin to the junctional site. Mediates docking of ADAM10 to zonula adherens through a PDZD11-dependent interaction with the ADAM10-binding protein TSPAN33. This chain is Pleckstrin homology domain-containing family A member 7 (Plekha7), found in Mus musculus (Mouse).